The following is a 311-amino-acid chain: MAKNKIAIIGAGHTGSTLAFIIAERALADVVLLEIPKNEKPARGKALDIKESGPILGFNGNVLGTSDYQDIAGADIVVITAGAARKPGMSRDDLIQINENVMAQVTEGIKKYAPESKIIVLTNPVDAMTYAVYKLSGFPKERVLGQSGILDTARYRTFVSEALNVAQTDVTGLVLGGHGDTMVPLLSTTMVGGVPLRELLAQDKIDAIVERTRKGGAEIVGLLGNGSAYYAPAAAIYEMAAAILNDERRLVPAITYLDGEYGFKDICLGVPTILGANGVEKVVEIELSDDEQQLRDSADAVEDVKSALKNK.

10 to 15 (GAGHTG) provides a ligand contact to NAD(+). Residues Arg85 and Arg91 each coordinate substrate. Residues Asn98 and 121–123 (LTN) contribute to the NAD(+) site. The substrate site is built by Asn123 and Arg154. The Proton acceptor role is filled by His178.

It belongs to the LDH/MDH superfamily. MDH type 3 family.

The enzyme catalyses (S)-malate + NAD(+) = oxaloacetate + NADH + H(+). Its function is as follows. Catalyzes the reversible oxidation of malate to oxaloacetate. In Staphylococcus carnosus (strain TM300), this protein is Malate dehydrogenase.